We begin with the raw amino-acid sequence, 378 residues long: Long-chain-fatty-acid--luciferin-component ligase (378 aa).

Belongs to the LuxE family.

It catalyses the reaction a long-chain fatty acid + L-cysteinyl-[protein] + ATP = an S-(long-chain fatty acyl)-L-cysteinyl-[protein] + AMP + diphosphate. It participates in lipid metabolism; fatty acid reduction for biolumincescence. Acyl-protein synthetase activates tetradecanoic acid. It is a component of the fatty acid reductase complex responsible for converting tetradecanoic acid to the aldehyde which serves as substrate in the luciferase-catalyzed reaction. In Aliivibrio fischeri (Vibrio fischeri), this protein is Long-chain-fatty-acid--luciferin-component ligase.